Reading from the N-terminus, the 313-residue chain is Biotin synthase (313 aa).

Positions 28–258 (NFGNDIELCS…LFPQARLRLS (231 aa)) constitute a Radical SAM core domain. Positions 46, 50, and 53 each coordinate [4Fe-4S] cluster. Residues cysteine 90, cysteine 121, cysteine 181, and arginine 256 each coordinate [2Fe-2S] cluster.

The protein belongs to the radical SAM superfamily. Biotin synthase family. As to quaternary structure, homodimer. Requires [4Fe-4S] cluster as cofactor. It depends on [2Fe-2S] cluster as a cofactor.

It carries out the reaction (4R,5S)-dethiobiotin + (sulfur carrier)-SH + 2 reduced [2Fe-2S]-[ferredoxin] + 2 S-adenosyl-L-methionine = (sulfur carrier)-H + biotin + 2 5'-deoxyadenosine + 2 L-methionine + 2 oxidized [2Fe-2S]-[ferredoxin]. Its pathway is cofactor biosynthesis; biotin biosynthesis; biotin from 7,8-diaminononanoate: step 2/2. In terms of biological role, catalyzes the conversion of dethiobiotin (DTB) to biotin by the insertion of a sulfur atom into dethiobiotin via a radical-based mechanism. This Francisella tularensis subsp. tularensis (strain WY96-3418) protein is Biotin synthase.